The chain runs to 169 residues: Thaumatin-like pathogenesis-related protein 2 (169 aa).

Positions 1–21 are cleaved as a signal peptide; that stretch reads MATSSAVLFFLLAVFAAGASA.

The protein belongs to the thaumatin family.

Functionally, associated with resistance against stem rust fungi. This chain is Thaumatin-like pathogenesis-related protein 2 (RASTL-2), found in Avena sativa (Oat).